We begin with the raw amino-acid sequence, 542 residues long: Keratin, type II cytoskeletal 75 (542 aa).

Residues M1–T26 show a composition bias toward polar residues. The interval M1–S44 is disordered. Residues M1–E139 are head. Residues A27–G42 are compositionally biased toward low complexity. Residues E140–L175 form a coil 1A region. An IF rod domain is found at E140–L453. Residues Q176 to Y194 are linker 1. The tract at residues V195–Q287 is coil 1B. The tract at residues N288–I310 is linker 12. A coil 2 region spans residues I311–E449. The tract at residues E450–H542 is tail. The interval T514–H542 is disordered.

Belongs to the intermediate filament family. In terms of assembly, heterodimer of a type I and a type II keratin. May associate with KRT17.

In terms of biological role, plays a central role in hair and nail formation. Essential component of keratin intermediate filaments in the companion layer of the hair follicle. The polypeptide is Keratin, type II cytoskeletal 75 (Krt75) (Rattus norvegicus (Rat)).